Reading from the N-terminus, the 220-residue chain is Ribosome biogenesis protein 15 (220 aa).

The tract at residues 1 to 82 is disordered; sequence MVKSTSKTST…KQANEKKSKD (82 aa). A compositionally biased stretch (basic and acidic residues) spans 9-30; sequence STKETVTKQPTEEKPIQEKEEL. A compositionally biased stretch (acidic residues) spans 39 to 60; it reads SDEEDEKDEDEIEGLAASDDEQ. An RRM domain is found at 91–169; sequence GIIYVSRLPH…HLLQVRVLPK (79 aa).

As to quaternary structure, component of the pre-66S ribosomal particle. Interacts with NOP7 and RRP1.

The protein localises to the cytoplasm. It localises to the nucleus. It is found in the nucleolus. Functionally, involved in the biogenesis of the 60S ribosomal subunit. Required for pre-rRNA processing and cytokinesis. Associates with the precursors of the 25S and 5.8S rRNAs. The protein is Ribosome biogenesis protein 15 of Saccharomyces cerevisiae (strain ATCC 204508 / S288c) (Baker's yeast).